The sequence spans 836 residues: MKDRIPFAVNNITCVILLSLFCNAASAVEFNTDVLDAADKKNIDFTRFSEAGYVLPGQYLLDVIVNGQSISPASLQISFVEPALSGDKAEKKLPQACLTSDMVRLMGLTAESLDKVVYWHDGQCADFHGLPGVDIRPDTGAGVLRINMPQAWLEYSDATWLPPSRWDDGIPGLMLDYNLNGTVSRNYQGGDSHQFSYNGTVGGNLGPWRLRADYQGSQEQSRYNGEKTTNRNFTWSRFYLFRAIPRWRANLTLGENNINSDIFRSWSYTGASLESDDRMLPPRLRGYAPQITGIAETNARVVVSQQGRVLYDSMVPAGPFSIQDLDSSVRGRLDVEVIEQNGRKKTFQVDTASVPYLTRPGQVRYKLVSGRSRGYGHETEGPVFATGEASWGLSNQWSLYGGAVLAGDYNALAAGAGWDLGVPGTLSADITQSVARIEGERTFQGKSWRLSYSKRFDNADADITFAGYRFSERNYMTMEQYLNARYRNDYSSREKEMYTVTLNKNVADWNTSFNLQYSRQTYWDIRKTDYYTVSVNRYFNVFGLQGVAVGLSASRSKYLGRDNDSAYLRISVPLGTGTASYSGSMSNDRYVNMAGYTDTFNDGLDSYSLNAGLNSGGGLTSQRQINAYYSHRSPLANLSANIASLQKGYTSFGVSASGGATITGKGAALHAGGMSGGTRLLVDTDGVGGVPVDGGQVVTNRWGTGVVTDISSYYRNTTSVDLKRLPDDVEATRSVVESALTEGAIGYRKFSVLKGKRLFAILRLADGSQPPFGASVTSEKGRELGMVADEGLAWLSGVTPGETLSVNWDGKIQCQVNVPETAISDQQLLLPCTPQK.

A signal peptide spans 1 to 24; sequence MKDRIPFAVNNITCVILLSLFCNA. Cys-814 and Cys-832 are oxidised to a cystine.

This sequence belongs to the fimbrial export usher family.

It localises to the cell outer membrane. Its function is as follows. Involved in the export and assembly of pili subunits across the outer membrane. Forms a hexameric ring-shaped pore in the outer bacterial membrane. The 2 nanometer-diameter pore allows the passage of the thin tip fibrillum. As for the rod, it probably unwinds into linear fibers which would therefore be narrow enough to pass through the pore. The sequence is that of Outer membrane usher protein PapC (papC) from Escherichia coli.